Reading from the N-terminus, the 328-residue chain is Methionyl-tRNA formyltransferase (328 aa).

Residue Ser-110 to Pro-113 coordinates (6S)-5,6,7,8-tetrahydrofolate.

It belongs to the Fmt family.

It catalyses the reaction L-methionyl-tRNA(fMet) + (6R)-10-formyltetrahydrofolate = N-formyl-L-methionyl-tRNA(fMet) + (6S)-5,6,7,8-tetrahydrofolate + H(+). Its function is as follows. Attaches a formyl group to the free amino group of methionyl-tRNA(fMet). The formyl group appears to play a dual role in the initiator identity of N-formylmethionyl-tRNA by promoting its recognition by IF2 and preventing the misappropriation of this tRNA by the elongation apparatus. This chain is Methionyl-tRNA formyltransferase, found in Prochlorococcus marinus (strain MIT 9215).